A 276-amino-acid chain; its full sequence is Elongation factor Ts, mitochondrial (276 aa).

The protein belongs to the EF-Ts family.

It is found in the mitochondrion. Its function is as follows. Associates with the EF-Tu.GDP complex and induces the exchange of GDP to GTP. It remains bound to the aminoacyl-tRNA.EF-Tu.GTP complex up to the GTP hydrolysis stage on the ribosome. This chain is Elongation factor Ts, mitochondrial, found in Leishmania infantum.